The primary structure comprises 789 residues: Molybdenum cofactor sulfurase (789 aa).

Lysine 251 is subject to N6-(pyridoxal phosphate)lysine. Residue cysteine 422 is part of the active site. Residues 628–789 (GDQVAQWLDQ…LICGETLEVD (162 aa)) form the MOSC domain. Serine 741 is modified (phosphoserine).

The protein belongs to the class-V pyridoxal-phosphate-dependent aminotransferase family. MOCOS subfamily. Pyridoxal 5'-phosphate serves as cofactor.

It carries out the reaction Mo-molybdopterin + L-cysteine + AH2 = thio-Mo-molybdopterin + L-alanine + A + H2O. It functions in the pathway cofactor biosynthesis; molybdopterin biosynthesis. In terms of biological role, sulfurates the molybdenum cofactor. Sulfation of molybdenum is essential for xanthine dehydrogenase (XDH) and aldehyde oxidase (ADO) enzymes in which molybdenum cofactor is liganded by 1 oxygen and 1 sulfur atom in active form. This is Molybdenum cofactor sulfurase from Drosophila willistoni (Fruit fly).